A 430-amino-acid chain; its full sequence is MPLPRAYLGTAQPPASVKEFYFVRHGATDLNEKEMHLQGEKHWGVQGAGTNIGLNGTGKRQAVLAGNVLRKLPIGSVVCSPLLRAIQTALIANIGFLCFDIDEDLKERDFGKHEGGYGPLKMFEDNYPDCEDTEMFSLRVAKALTHAKNENTLFVSHGGVLRVIAALLGVDLTKEHTNNGRVLHFRRGFSHWTVEIHQSPVILVSGSNRGVGKAIAEDLIAHGYRLSLGARKVKDLEVAFGPQDEWLHYARFDAEDHGTMAAWVTAAVEKFGRIDGLVNNAGYGEPVNLDKHVDYQRFHLQWYINCVAPLRMTELCLPHLYETGSGRIVNINSMSGQRVLNPLVGYNMTKHALGGLTKTTQHVGWDRRCAAIDICLGFVATDMSAWTDLIASKDMIQPEDIAKLVREAIERPNRAYVPRSEVMCIKEATR.

Residue 203-227 (LVSGSNRGVGKAIAEDLIAHGYRLS) coordinates NAD(+). Ser333 contacts substrate. The Proton acceptor role is filled by Tyr346.

Belongs to the short-chain dehydrogenases/reductases (SDR) family.

The protein operates within opine metabolism; mannopine biosynthesis. Its function is as follows. Reduces deoxy-fructosyl-glutamine to mannopine. This chain is Agropine synthesis reductase (mas1), found in Rhizobium rhizogenes (Agrobacterium rhizogenes).